Reading from the N-terminus, the 452-residue chain is Class E vacuolar protein-sorting machinery protein HSE1 (452 aa).

Ser2 is modified (N-acetylserine). The VHS domain occupies 15 to 145 (ATDPKLRSDN…KIKRKAPYLV (131 aa)). Disordered stretches follow at residues 144–166 (LVQPNVPEKHNMSTQADNSDDEE) and 187–212 (QEKESAEVLPQQQQQHQQQNQAPAHK). A Phosphoserine modification is found at Ser162. Residues 162–181 (SDDEELQKALKMSLFEYEKQ) form the UIM domain. Residues 197 to 207 (QQQQQHQQQNQ) are compositionally biased toward low complexity. An SH3 domain is found at 217–276 (TVVRRVRALYDLTTNEPDELSFRKGDVITVLEQVYRDWWKGALRGNMGIFPLNYVTPIVE). Residues 389–452 (AGMTHANNTP…VSQPPPGYEQ (64 aa)) form a disordered region. Residues 393–433 (HANNTPVMPPQRQSYQSNEYSPYPSNLPIQHPTNSANNTPQ) are compositionally biased toward polar residues.

The protein belongs to the STAM family. Component of the ESCRT-0 complex composed of HSE1 and VPS27. Interacts with the ESCRT-I subunit VPS23, the UBP7 deubiquitinase and the E3 ligase RSP5. May form a complex composed of VPS27, HSE1 and DOA1. Interacts (via SH3 domain) with DOA1.

It is found in the endosome membrane. Functionally, component of the ESCRT-0 complex which is the sorting receptor for ubiquitinated cargo proteins at the multivesicular body (MVB) and recruits ESCRT-I to the MVB outer membrane. In Saccharomyces cerevisiae (strain ATCC 204508 / S288c) (Baker's yeast), this protein is Class E vacuolar protein-sorting machinery protein HSE1 (HSE1).